The chain runs to 184 residues: ATP synthase subunit b, chloroplastic (184 aa).

The chain crosses the membrane as a helical span at residues 26 to 48; sequence ILATNLINLSVVLGVLIFFGKGV.

It belongs to the ATPase B chain family. F-type ATPases have 2 components, F(1) - the catalytic core - and F(0) - the membrane proton channel. F(1) has five subunits: alpha(3), beta(3), gamma(1), delta(1), epsilon(1). F(0) has four main subunits: a(1), b(1), b'(1) and c(10-14). The alpha and beta chains form an alternating ring which encloses part of the gamma chain. F(1) is attached to F(0) by a central stalk formed by the gamma and epsilon chains, while a peripheral stalk is formed by the delta, b and b' chains.

It localises to the plastid. Its subcellular location is the chloroplast thylakoid membrane. In terms of biological role, f(1)F(0) ATP synthase produces ATP from ADP in the presence of a proton or sodium gradient. F-type ATPases consist of two structural domains, F(1) containing the extramembraneous catalytic core and F(0) containing the membrane proton channel, linked together by a central stalk and a peripheral stalk. During catalysis, ATP synthesis in the catalytic domain of F(1) is coupled via a rotary mechanism of the central stalk subunits to proton translocation. Functionally, component of the F(0) channel, it forms part of the peripheral stalk, linking F(1) to F(0). The protein is ATP synthase subunit b, chloroplastic of Acorus calamus (Sweet flag).